We begin with the raw amino-acid sequence, 272 residues long: Phosphatidylglycerol--prolipoprotein diacylglyceryl transferase (272 aa).

Helical transmembrane passes span L17 to A37, L55 to Y75, V90 to F110, F125 to G145, P174 to F194, M202 to F222, and G230 to I250. Residue R138 coordinates a 1,2-diacyl-sn-glycero-3-phospho-(1'-sn-glycerol).

This sequence belongs to the Lgt family.

It is found in the cell inner membrane. The catalysed reaction is L-cysteinyl-[prolipoprotein] + a 1,2-diacyl-sn-glycero-3-phospho-(1'-sn-glycerol) = an S-1,2-diacyl-sn-glyceryl-L-cysteinyl-[prolipoprotein] + sn-glycerol 1-phosphate + H(+). Its pathway is protein modification; lipoprotein biosynthesis (diacylglyceryl transfer). In terms of biological role, catalyzes the transfer of the diacylglyceryl group from phosphatidylglycerol to the sulfhydryl group of the N-terminal cysteine of a prolipoprotein, the first step in the formation of mature lipoproteins. The sequence is that of Phosphatidylglycerol--prolipoprotein diacylglyceryl transferase from Acinetobacter baumannii (strain AB307-0294).